A 434-amino-acid chain; its full sequence is Methylenetetrahydrofolate--tRNA-(uracil-5-)-methyltransferase TrmFO (434 aa).

An FAD-binding site is contributed by 9 to 14 (GAGLAG).

It belongs to the MnmG family. TrmFO subfamily. FAD serves as cofactor.

Its subcellular location is the cytoplasm. It catalyses the reaction uridine(54) in tRNA + (6R)-5,10-methylene-5,6,7,8-tetrahydrofolate + NADH + H(+) = 5-methyluridine(54) in tRNA + (6S)-5,6,7,8-tetrahydrofolate + NAD(+). The enzyme catalyses uridine(54) in tRNA + (6R)-5,10-methylene-5,6,7,8-tetrahydrofolate + NADPH + H(+) = 5-methyluridine(54) in tRNA + (6S)-5,6,7,8-tetrahydrofolate + NADP(+). In terms of biological role, catalyzes the folate-dependent formation of 5-methyl-uridine at position 54 (M-5-U54) in all tRNAs. This Bacillus licheniformis (strain ATCC 14580 / DSM 13 / JCM 2505 / CCUG 7422 / NBRC 12200 / NCIMB 9375 / NCTC 10341 / NRRL NRS-1264 / Gibson 46) protein is Methylenetetrahydrofolate--tRNA-(uracil-5-)-methyltransferase TrmFO.